Consider the following 290-residue polypeptide: Picrinine-N-methytransferase (290 aa).

Residues 71–80 (MLDVGCGIGG) form an SAM motif I region. Residues 133–139 (DGTFDLV) carry the Vacuolar targeting signal motif. The SAM motif II stretch occupies residues 134–142 (GTFDLVFTI). Residues 161–170 (VAAPGAPIVI) are SAM motif III.

Belongs to the class I-like SAM-binding methyltransferase superfamily. gTMT family. As to quaternary structure, homodimer. Accumulates in tissues actively synthesizing monoterpenoid indole alkaloids (MIAs) (at protein level). Mainly expressed in young leaves and, to a lower extent, in roots and stems.

The protein resides in the vacuole membrane. It catalyses the reaction picrinine + S-adenosyl-L-methionine = ervincine + S-adenosyl-L-homocysteine + H(+). It functions in the pathway alkaloid biosynthesis; vindoline biosynthesis. In terms of biological role, S-adenosyl-L-methionine-dependent N-methyltransferase involved in the biosynthesis of biologically active monoterpenoid indole alkaloids (MIAs) natural products including vindoline. Catalyzes the conversion of picrinine to N-methylpicrinine (ervincine). Also accepts, with low efficiency, 21-hydroxycyclolochnericine and norajmaline as substrates. This Rauvolfia serpentina (Serpentine wood) protein is Picrinine-N-methytransferase.